The chain runs to 132 residues: Small ribosomal subunit protein uS8 (132 aa).

Belongs to the universal ribosomal protein uS8 family. Part of the 30S ribosomal subunit. Contacts proteins S5 and S12.

Functionally, one of the primary rRNA binding proteins, it binds directly to 16S rRNA central domain where it helps coordinate assembly of the platform of the 30S subunit. This Streptococcus equi subsp. equi (strain 4047) protein is Small ribosomal subunit protein uS8.